We begin with the raw amino-acid sequence, 508 residues long: Photosystem II CP47 reaction center protein (508 aa).

Transmembrane regions (helical) follow at residues 21–36 (SVHIMHTALVAGWAGS), 101–115 (IVFSGLCFLAAIWHW), 140–156 (GIHLFLSGVACFGFGAF), 203–218 (IAAGTLGILAGLFHLS), 237–252 (VLSSSIAAVFFAAFVV), and 457–472 (SFALLFFFGHIWHGAR).

It belongs to the PsbB/PsbC family. PsbB subfamily. In terms of assembly, PSII is composed of 1 copy each of membrane proteins PsbA, PsbB, PsbC, PsbD, PsbE, PsbF, PsbH, PsbI, PsbJ, PsbK, PsbL, PsbM, PsbT, PsbX, PsbY, PsbZ, Psb30/Ycf12, at least 3 peripheral proteins of the oxygen-evolving complex and a large number of cofactors. It forms dimeric complexes. It depends on Binds multiple chlorophylls. PSII binds additional chlorophylls, carotenoids and specific lipids. as a cofactor.

The protein localises to the plastid. It localises to the chloroplast thylakoid membrane. Functionally, one of the components of the core complex of photosystem II (PSII). It binds chlorophyll and helps catalyze the primary light-induced photochemical processes of PSII. PSII is a light-driven water:plastoquinone oxidoreductase, using light energy to abstract electrons from H(2)O, generating O(2) and a proton gradient subsequently used for ATP formation. In Aethionema grandiflorum (Persian stone-cress), this protein is Photosystem II CP47 reaction center protein.